The following is a 142-amino-acid chain: Probable pilin MJ0832.1 (142 aa).

Positions 1 to 8 (MLKFRKRG) are excised as a propeptide. A QXSXEXXXL motif is present at residues 9-17 (QISLEFSLL).

Post-translationally, the N-terminus is cleaved by the prepilin peptidase EppA, which recognizes the class III signal sequence.

It is found in the secreted. The protein localises to the cell surface. It localises to the fimbrium. The chain is Probable pilin MJ0832.1 from Methanocaldococcus jannaschii (strain ATCC 43067 / DSM 2661 / JAL-1 / JCM 10045 / NBRC 100440) (Methanococcus jannaschii).